Consider the following 1736-residue polypeptide: MSLEFGSVALQTQNEDEEFDKEDFEREKELQQLLTDLPHDMLDDELSSPERHDSDCSMDGRAAEPHPSEHLERKWIERDILPKPHSMNCGNGWEENRSKTEDQHLGYHPGEGGDEGGSGYSPPGKREQADLYRLPEDFRPYTGGSKQAASVITFSDPQRDNFQQFGLSRGPSCGALEPYKAVYKPYRNSSVQKNSSPAQEVAASDMFEGLQQQFLGANETDSAENIHIIQLQVLNKAKERQLDSLVEKLKDSERQVRYLSHQLLIVQDEKDGLALSLRESQQLFQNGKEREMQLEAQIAALEAQVEAFRVSEEKLTKKLRTTEITLESLKQQLVELHHSESLQRAREHHESIVASLTQKHEEQVSSLQKNLDATITALQEQESICTRLKDHVQQLERNQEAVRLEKTELINRLTRSLEDSQKQCAHLLQSGSVQEVAQLQLQLQQAQKAHVLSESMNKALQEELTELKDEISLYESAAELGVLPGDSEGDLSIELTESCVDLGIKKVNWKQSKANRVTQQESPDEDPSKDELILKLKTQVQRLLTSNSVKRHLVSQLQSDLRECRETMEAFQQSKDGDSGMETKTDTSEKTTKQLWLESSEAINREDILQLKNEVQVLQKQNQELKEAEEKLRSTNQDLCNQMRQMVQEFDHDKQEAVARCERTYQQHHEAMKAQIRESLLAKHAVEKQHLLEVYEGTQSQLRSDLDKMNKEMAAVQECYLEVCREKDGLESTLRKTMEKAQEQKRQLLEAREEYVRKLKLELEEKYQETLKTERQSWLQEQAAGATQQAEKESRQKLIQQLEKEWQSKLDDSLAAWRKTTSDRGSQTEQVACPAAVSKAEAAAVLAEEQARQVQQEKELATKEALRKPEVELELKYCEIIAQKVETAVQNARSRWIQELPMLAEYKALLRAQQQEWAKQQELAVAHRLSLALSEAKEKWKSELENMKPNVMSVKELEEKVHSLQKELELKDEEVPVIVRAEVAKARTEWNKEKQEEIHKIQEQNEEDYRQFLEDHRNKINEVLAAAKEDFVKQKAELLLQKETEFQACLDQSRKEWTLQEAQQTQVEIRQYEEDTLTVLAYLLKDTQLEYGGDSQDKQLLEAMSACSSKWISVQYFEKVKACIQKALHDMLSLLTDSVASEQEKRKVVKSSADTVSWTSSEGDSAVPVPLPDSTSVRCAQSSAWLKAEAETDKKICEIKGLRCGHCFQELEKEKQECQDLRRKLEKCRRHLQHLERTHRAAVEKLGEENSRVVEELIEENHDMKNKLEALRALCRTPPRSLSAGAAESAGPSCSRQALEELRGQYIKAVRKIKRDMLRYIQESKERAAEMVKAEVLRERQETARKMRNYYLSCLQQILQDNGKEEGAEKKIMSAASKLATMAELLGTIAESDCRVRCAQAGRSVALPLASEMLTGTERSERSGVNHNIPHYVESKPNSGKTLPRSVCEQLPGRKAAPRSQRRLEESKHREMRPMASTALPSDCRCGDASCRHSGVLAKDVAPEFVPCQGEGGFDLHEKRDALGAGSEPLLYSAAHSFLGGAEKNSSPRCISESRHTTLRSPSEMPRLKALMCGSPTETDSIASEKSQGVGSQDSPVKDGVGPSSSPAWPSDSTLPCGSPAVLFLGDGSQRTQEMLGDSVQWKQFSATSCHPDAQKSNMVCRSSHTLDLPKETLHSQQGKMGATLGHPSPQSTDMLKTDFKRLSGTGPSSLCQKPLIKLTAPMPSQQDSGFDSPLE.

The tract at residues 1–60 (MSLEFGSVALQTQNEDEEFDKEDFEREKELQQLLTDLPHDMLDDELSSPERHDSDCSMDG) is interaction with PLK4. The interval 1 to 127 (MSLEFGSVAL…SGYSPPGKRE (127 aa)) is disordered. Basic and acidic residues-rich tracts occupy residues 61–82 (RAAEPHPSEHLERKWIERDILP) and 94–105 (EENRSKTEDQHL). 6 coiled-coil regions span residues 228 to 481 (IIQL…AELG), 552 to 651 (HLVS…QEFD), 692 to 776 (LEVY…TERQ), 835 to 868 (AAVSKAEAAAVLAEEQARQVQQEKELATKEALRK), 950 to 1075 (NVMS…YEED), and 1205 to 1315 (GHCF…KIKR). Residues 571–592 (FQQSKDGDSGMETKTDTSEKTT) form a disordered region. A compositionally biased stretch (basic and acidic residues) spans 575–592 (KDGDSGMETKTDTSEKTT). Position 1277 is a phosphothreonine (threonine 1277). Disordered regions lie at residues 1416–1479 (GTER…ASTA), 1543–1562 (EKNSSPRCISESRHTTLRSP), 1574–1614 (GSPT…SDST), and 1677–1736 (QQGK…SPLE). Over residues 1462 to 1473 (RRLEESKHREMR) the composition is skewed to basic and acidic residues. Polar residues-rich tracts occupy residues 1576–1595 (PTETDSIASEKSQGVGSQDS) and 1603–1614 (PSSSPAWPSDST). Lysine 1714 bears the N6-acetyllysine mark.

The protein belongs to the CEP152 family. In terms of assembly, interacts (via N-terminus) with PLK4; the interaction is mutally exclusive with a PLK4:CEP192 interaction. Interacts (via C-terminus) with CPAP (via-N-terminus). Interacts with CINP. Interacts with CDK5RAP2, WDR62, CEP63 and CEP131. CEP63, CDK5RAP2, CEP152, WDR62 are proposed to form a stepwise assembled complex at the centrosome forming a ring near parental centrioles. Interacts with DEUP1; this interaction recruits CEP152 to the deuterosome. The interactions with CEP63 and DEUP1 are mutually exclusive. Interacts with CCDC66.

The protein localises to the cytoplasm. The protein resides in the cytoskeleton. Its subcellular location is the microtubule organizing center. It localises to the centrosome. It is found in the centriole. Necessary for centrosome duplication; the function also seems to involve CEP63, CDK5RAP2 and WDR62 through a stepwise assembled complex at the centrosome that recruits CDK2 required for centriole duplication. Acts as a molecular scaffold facilitating the interaction of PLK4 and CPAP, 2 molecules involved in centriole formation. Proposed to snatch PLK4 away from PLK4:CEP92 complexes in early G1 daughter centriole and to reposition PLK4 at the outer boundary of a newly forming CEP152 ring structure. Also plays a key role in deuterosome-mediated centriole amplification in multiciliated that can generate more than 100 centrioles. Overexpression of cep152 can drive amplification of centrioles. The protein is Centrosomal protein of 152 kDa (Cep152) of Mus musculus (Mouse).